A 135-amino-acid chain; its full sequence is Salivary protein 15 (135 aa).

The signal sequence occupies residues 1-21; that stretch reads MESFVAMKVVCILFLVGVVAA. N22 carries N-linked (GlcNAc...) asparagine glycosylation. Residues 48–67 form a required for Borrelia OspC-binding region; it reads PNYISNHQKLALKLLKICKD. 2 N-linked (GlcNAc...) asparagine glycosylation sites follow: N92 and N104. The interval 116 to 135 is CD4-binding; the sequence is GPNGQTCAEKNKCVGHIPGC.

It belongs to the salp15 family. Monomer. Interacts with host CD4. Interacts with host DC-SIGN (CD209). As to quaternary structure, (Microbial infection) Interacts with Borrelia outer surface protein C (OspC). In terms of processing, glycosylated. In terms of tissue distribution, expressed in salivary glands. Detected in host skin, at the site of natural inoculation.

It is found in the secreted. Its function is as follows. Salivary tick protein that downregulates host immune system by binding to both dendritic cells, and CD4(+) T cells. Specifically binds to the CD4 coreceptor on T cells. This interaction prevents the activation of the Src kinase, Lck, and its downstream substrate Zap-70, and results in deficient activation of PLCgamma1, the repression of calcium fluxes triggered by T-cell antigen receptor (TCR) ligation, and a subsequent reduction in interleukin-2 production. This salivary protein also binds to DC-SIGN (CD209) on dendritic cells (DC) and activates the Raf-1 kinase/MEK signaling pathway that results in down-regulating expression of pro-inflammatory cytokines. Furthermore, it inhibits T cell proliferation induced by DCs. It also inhibits in vitro keratinocyte inflammation induced by Borrelia burgdorferi or by the major outer surface protein (OspC) of Borrelia. In addition, it downregulates chemokines and monocyte chemoattractant protein 1, as well as several antimicrobial peptides such as defensins, cathelicidin, psoriasin, and RNase 7. Apart from its immunomodulatory activities, it is also associated with protection of Borrelia spirochetes from antibody-mediated killing through its binding to OspC. In vivo, tests on different immune disease animal models show promising therapeutic results, e.g., in inhibiting HIV infection, experimental autoimmune encephalomyelitis, transplantation rejection, and asthma. Functionally, (Microbial infection) Protects Borrelia garinii (strains A87S and VSBP) from host complement-mediated killing. In terms of biological role, (Microbial infection) Partially protects Borrelia burgdorferi (strains VS215 and B31) from host complement-mediated killing. The protein is Salivary protein 15 of Ixodes scapularis (Black-legged tick).